The sequence spans 161 residues: SsrA-binding protein (161 aa).

The disordered stretch occupies residues 138 to 161 (DKRTDSKEKDWNRDKARIMKSSLR). Residues 139 to 154 (KRTDSKEKDWNRDKAR) show a composition bias toward basic and acidic residues.

Belongs to the SmpB family.

The protein localises to the cytoplasm. Its function is as follows. Required for rescue of stalled ribosomes mediated by trans-translation. Binds to transfer-messenger RNA (tmRNA), required for stable association of tmRNA with ribosomes. tmRNA and SmpB together mimic tRNA shape, replacing the anticodon stem-loop with SmpB. tmRNA is encoded by the ssrA gene; the 2 termini fold to resemble tRNA(Ala) and it encodes a 'tag peptide', a short internal open reading frame. During trans-translation Ala-aminoacylated tmRNA acts like a tRNA, entering the A-site of stalled ribosomes, displacing the stalled mRNA. The ribosome then switches to translate the ORF on the tmRNA; the nascent peptide is terminated with the 'tag peptide' encoded by the tmRNA and targeted for degradation. The ribosome is freed to recommence translation, which seems to be the essential function of trans-translation. This is SsrA-binding protein from Aliivibrio fischeri (strain ATCC 700601 / ES114) (Vibrio fischeri).